The primary structure comprises 89 residues: Small ribosomal subunit protein uS15 (89 aa).

The segment covering 1 to 21 (MSITAERKAEVIKDNARDKGD) has biased composition (basic and acidic residues). Residues 1–26 (MSITAERKAEVIKDNARDKGDTGSPE) are disordered.

The protein belongs to the universal ribosomal protein uS15 family. As to quaternary structure, part of the 30S ribosomal subunit. Forms a bridge to the 50S subunit in the 70S ribosome, contacting the 23S rRNA.

In terms of biological role, one of the primary rRNA binding proteins, it binds directly to 16S rRNA where it helps nucleate assembly of the platform of the 30S subunit by binding and bridging several RNA helices of the 16S rRNA. Functionally, forms an intersubunit bridge (bridge B4) with the 23S rRNA of the 50S subunit in the ribosome. This chain is Small ribosomal subunit protein uS15, found in Sphingopyxis alaskensis (strain DSM 13593 / LMG 18877 / RB2256) (Sphingomonas alaskensis).